Here is a 698-residue protein sequence, read N- to C-terminus: G1/S-specific cyclin CCN1 (698 aa).

Over residues 1–11 the composition is skewed to low complexity; that stretch reads MTSLQQQQQQQ. Disordered regions lie at residues 1–21, 277–326, 469–577, 599–619, and 659–698; these read MTSL…PHHI, QKKQ…DDED, DEDE…GSIL, SNSS…EKRY, and NNTN…QYHQ. Positions 277–302 are enriched in polar residues; sequence QKKQKKAFSSNSSRTTTASYTHQNQS. Composition is skewed to acidic residues over residues 310–326 and 469–480; these read DEDI…DDED and DEDENVSTDDEA. 2 stretches are compositionally biased toward polar residues: residues 493–520 and 528–567; these read DGNN…NHPQ and PSAT…SSFA. Over residues 659 to 669 the composition is skewed to polar residues; the sequence is NNTNSSSPLMN. The span at 670 to 690 shows a compositional bias: low complexity; sequence QQQQYYHQQQHQQQVTQSSLY.

Belongs to the cyclin family.

In terms of biological role, essential for the control of the cell cycle at the G1/S (start) transition. Interacts with the CDC2 protein kinase to form MPF. This Candida albicans (strain WO-1) (Yeast) protein is G1/S-specific cyclin CCN1 (CCN1).